Consider the following 470-residue polypeptide: FRIGIDA-like protein 1 (470 aa).

The stretch at 336-369 (KDQNLESEFTQEKVEERVEELEKNKALRKRNTTN) forms a coiled coil. Residues 355 to 400 (ELEKNKALRKRNTTNPPKQEPQQKGKKRTRDCKNGSQVPVPSQQLL) are disordered. Over residues 388–400 (NGSQVPVPSQQLL) the composition is skewed to polar residues.

It belongs to the Frigida family. Component of the transcription activator complex FRI-C composed of FRI, FRL1, SUF4, FLX and FES1. Interacts with FRI and SUF4. In terms of tissue distribution, expressed during seed development and in dry seed. Preferentially expressed in the chalazal endosperm during early stages of seed development.

Functionally, required for FRI-mediated up-regulation of FLC transcripts, but not redundant with FRI and only partially redundant with FRL2. Required for the stabilization of the FRI-C complex. The chain is FRIGIDA-like protein 1 (FRL1) from Arabidopsis thaliana (Mouse-ear cress).